The primary structure comprises 376 residues: Mitogen-activated protein kinase 2 (376 aa).

One can recognise a Protein kinase domain in the interval 32–319; that stretch reads YVPIKPIGRG…VTEALQHPYM (288 aa). Residues 38-46 and K61 each bind ATP; that span reads IGRGAYGVV. D158 functions as the Proton acceptor in the catalytic mechanism. Residue T191 is modified to Phosphothreonine. The TXY motif lies at 191–193; it reads TEY. A Phosphotyrosine modification is found at Y193. T196 is subject to Phosphothreonine.

It belongs to the protein kinase superfamily. CMGC Ser/Thr protein kinase family. MAP kinase subfamily. Interacts with MKK3. Post-translationally, dually phosphorylated on Thr-191 and Tyr-193, which activates the enzyme. Phosphorylated on Ser residue. Highest levels in the stem. Present in the leaf, root and flower, but not in seeds.

The enzyme catalyses L-seryl-[protein] + ATP = O-phospho-L-seryl-[protein] + ADP + H(+). It catalyses the reaction L-threonyl-[protein] + ATP = O-phospho-L-threonyl-[protein] + ADP + H(+). Activated by threonine and tyrosine phosphorylation. In Arabidopsis thaliana (Mouse-ear cress), this protein is Mitogen-activated protein kinase 2 (MPK2).